Reading from the N-terminus, the 64-residue chain is Large ribosomal subunit protein bL35 (64 aa).

The tract at residues 19–41 (SGKVKRERMNGSHNLEHKNRKRT) is disordered. Over residues 25 to 35 (ERMNGSHNLEH) the composition is skewed to basic and acidic residues.

The protein belongs to the bacterial ribosomal protein bL35 family.

This chain is Large ribosomal subunit protein bL35, found in Chlorobaculum tepidum (strain ATCC 49652 / DSM 12025 / NBRC 103806 / TLS) (Chlorobium tepidum).